Here is a 372-residue protein sequence, read N- to C-terminus: Lipoyl synthase, mitochondrial (372 aa).

Residues Cys103, Cys108, Cys114, Cys134, Cys138, Cys141, and Ser349 each contribute to the [4Fe-4S] cluster site. The Radical SAM core domain occupies 119–338 (EHGTQTATIM…EERGNQLGFL (220 aa)).

It belongs to the radical SAM superfamily. Lipoyl synthase family. [4Fe-4S] cluster is required as a cofactor.

The protein resides in the mitochondrion. The enzyme catalyses [[Fe-S] cluster scaffold protein carrying a second [4Fe-4S](2+) cluster] + N(6)-octanoyl-L-lysyl-[protein] + 2 oxidized [2Fe-2S]-[ferredoxin] + 2 S-adenosyl-L-methionine + 4 H(+) = [[Fe-S] cluster scaffold protein] + N(6)-[(R)-dihydrolipoyl]-L-lysyl-[protein] + 4 Fe(3+) + 2 hydrogen sulfide + 2 5'-deoxyadenosine + 2 L-methionine + 2 reduced [2Fe-2S]-[ferredoxin]. It participates in protein modification; protein lipoylation via endogenous pathway; protein N(6)-(lipoyl)lysine from octanoyl-[acyl-carrier-protein]: step 2/2. Its function is as follows. Catalyzes the radical-mediated insertion of two sulfur atoms into the C-6 and C-8 positions of the octanoyl moiety bound to the lipoyl domains of lipoate-dependent enzymes, thereby converting the octanoylated domains into lipoylated derivatives. This chain is Lipoyl synthase, mitochondrial, found in Drosophila willistoni (Fruit fly).